A 1612-amino-acid polypeptide reads, in one-letter code: uncharacterized protein (1612 aa).

A coiled-coil region spans residues Glu23–Asn52. Over residues Ile46–His93 the composition is skewed to basic and acidic residues. 2 disordered regions span residues Ile46–Val94 and Glu369–Gln400. A compositionally biased stretch (polar residues) spans Asp375 to Leu394. Residues Phe479–Asn499 form a helical membrane-spanning segment. Disordered regions lie at residues Thr698–Leu777, Asn992–Pro1037, Ser1091–Ser1157, and Asn1257–Lys1291. Residues Lys708 to Leu777 are compositionally biased toward basic and acidic residues. Composition is skewed to low complexity over residues Asn996–Asn1028, Ser1102–Asn1140, and Asn1257–Asn1271. 3 coiled-coil regions span residues Tyr1338–Lys1362, Ser1444–Asp1469, and Asn1553–Thr1601. Over residues Met1554–Glu1566 the composition is skewed to basic and acidic residues. The disordered stretch occupies residues Met1554–Lys1612. Residues Gly1567–Asp1597 show a composition bias toward acidic residues.

The protein resides in the membrane. This is an uncharacterized protein from Plasmodium falciparum (isolate 3D7).